A 446-amino-acid chain; its full sequence is MREIVHIQTGQCGNQIGAKFWEVVSDEHGIERDGLYKGTNDMQLERISVYYNEIGSNKYVPRAVLVDLEPGTMDSVRSGPLGGLFRPDNFIFGQSGAGNNWAKGHYTEGAELVDSVLDVVRKEAEGTDCLQGFQITHSLGGGTGAGMGTLLMSKIREEYPDRMMCTYSVVPSPAVSDTVVEPYNATLSVHQLVENSDETFCIDNEALYDICFRTLKLSTPTYGDLNHLVSFVMSGITTCLRFPGQLNSDLRKLAVNMVPFPRLHFFMTGFAPLTARGSQQYRAVTVPELTQQMFDAKNMMAASDPRHGRYLTVAAVFRGKVSMKEVEEQMQNVQNKNSAYFVEWIPNNVLSAQCDIPPRGVKMAVTFLGNSTAIQELFKRVSDHFTAMFKRKAFLHWYTQEGMDEMEFTEAESNMQDLIAEYQQYQDATVEEEAEYEEEVPADEES.

GTP is bound by residues Gln11, Glu69, Ser138, Gly142, Thr143, Gly144, Asn204, and Asn226. Residue Glu69 coordinates Mg(2+).

Belongs to the tubulin family. In terms of assembly, dimer of alpha and beta chains. A typical microtubule is a hollow water-filled tube with an outer diameter of 25 nm and an inner diameter of 15 nM. Alpha-beta heterodimers associate head-to-tail to form protofilaments running lengthwise along the microtubule wall with the beta-tubulin subunit facing the microtubule plus end conferring a structural polarity. Microtubules usually have 13 protofilaments but different protofilament numbers can be found in some organisms and specialized cells. The cofactor is Mg(2+).

The protein resides in the cytoplasm. It is found in the cytoskeleton. In terms of biological role, tubulin is the major constituent of microtubules, a cylinder consisting of laterally associated linear protofilaments composed of alpha- and beta-tubulin heterodimers. Microtubules grow by the addition of GTP-tubulin dimers to the microtubule end, where a stabilizing cap forms. Below the cap, tubulin dimers are in GDP-bound state, owing to GTPase activity of alpha-tubulin. The sequence is that of Tubulin beta-1 chain (TUBB1) from Suillus bovinus (Jersey cow bolete).